Here is a 466-residue protein sequence, read N- to C-terminus: MSSLTRLTLAQVAQKLKAREVSAVEVLDACLTQVRSTEKQISAYVCVLEDQARAAAHATDADIRGRWKGPLHGVPVAVKDLYDIAGVPTTASSPAHELDAQQDPARVRRLQDAGAVILGKTHTHEFAYGRITPKSRNPRDPGRTPGGSSGGSAATVAACCVYLATGTDTGGSVRIPSSMCNTVGLKQPTVGRVHGAGVSSLSWSLDHPGPITRTVEDTALMLQVMAGFDPADPRSLDEPVPSYAEGLGQGVKGLRWGVPKNYFFDRVDPEVESAVRAAIDQLKELGAELVEVEVPMAEQIIPVKFGIMLPEASAYHRTMLRESPELYTADVRILLELGDLVTATDYLQAQRVRTLMQRAVAEMYQRIDVLIAPTLPIPAARSGEEVHTWPDGTVEALVMAYTRFTSFGNVTGLPTLNLPCGFSKDGLRSACRSGRPLDEKTLLRAGLAYEKATTWHQRHPELIGAG.

Active-site charge relay system residues include Lys-79 and Ser-148. The disordered stretch occupies residues 128–152 (YGRITPKSRNPRDPGRTPGGSSGGS). Ser-172 (acyl-ester intermediate) is an active-site residue.

Belongs to the amidase family.

The catalysed reaction is a monocarboxylic acid amide + H2O = a monocarboxylate + NH4(+). This Pseudomonas putida (Arthrobacter siderocapsulatus) protein is Amidase.